Consider the following 358-residue polypeptide: Histidinol-phosphate aminotransferase (358 aa).

Lys221 is subject to N6-(pyridoxal phosphate)lysine.

The protein belongs to the class-II pyridoxal-phosphate-dependent aminotransferase family. Histidinol-phosphate aminotransferase subfamily. Homodimer. It depends on pyridoxal 5'-phosphate as a cofactor.

The catalysed reaction is L-histidinol phosphate + 2-oxoglutarate = 3-(imidazol-4-yl)-2-oxopropyl phosphate + L-glutamate. Its pathway is amino-acid biosynthesis; L-histidine biosynthesis; L-histidine from 5-phospho-alpha-D-ribose 1-diphosphate: step 7/9. This chain is Histidinol-phosphate aminotransferase, found in Caldicellulosiruptor saccharolyticus (strain ATCC 43494 / DSM 8903 / Tp8T 6331).